The chain runs to 325 residues: Leucine-rich repeat protein FLOR 1 (325 aa).

10 LRR repeats span residues 65–88, 89–114, 115–140, 142–162, 163–185, 187–211, 213–233, 234–256, 257–280, and 281–305; these read NRRV…QIGD, LVDL…ITKL, KNLN…ELKS, TFLD…LSQM, PKLE…SFGS, VGNV…LSKY, FNAV…FFGR, NKTT…KVKF, ARSI…ALTK, and LHLE…LLQT.

The protein belongs to the polygalacturonase-inhibiting protein family. In terms of assembly, interacts with MADS domain transcription factors during flower development. Component of a complex made of FLOR1, VSP1 and AGAMOUS (AG). Binds directly with AG. Confined to flowers and inflorescences (e.g. inflorescence meristems, floral meristems, stamens and carpels).

It is found in the cytoplasm. Its subcellular location is the nucleus. The protein localises to the perinuclear region. It localises to the cell membrane. Functionally, promotes flowering transition in long days (LD). In Arabidopsis thaliana (Mouse-ear cress), this protein is Leucine-rich repeat protein FLOR 1.